A 367-amino-acid polypeptide reads, in one-letter code: Cobalt-precorrin-5B C(1)-methyltransferase (367 aa).

The protein belongs to the CbiD family.

It carries out the reaction Co-precorrin-5B + S-adenosyl-L-methionine = Co-precorrin-6A + S-adenosyl-L-homocysteine. Its pathway is cofactor biosynthesis; adenosylcobalamin biosynthesis; cob(II)yrinate a,c-diamide from sirohydrochlorin (anaerobic route): step 6/10. Catalyzes the methylation of C-1 in cobalt-precorrin-5B to form cobalt-precorrin-6A. The polypeptide is Cobalt-precorrin-5B C(1)-methyltransferase (Priestia megaterium (Bacillus megaterium)).